A 586-amino-acid chain; its full sequence is Pyruvate kinase (586 aa).

Arg32 contacts substrate. K(+)-binding residues include Asn34, Ser36, Asp66, and Thr67. 34–37 (NFSH) lines the ATP pocket. 2 residues coordinate ATP: Arg73 and Lys156. Glu222 serves as a coordination point for Mg(2+). Residues Gly245, Asp246, and Thr278 each contribute to the substrate site. Asp246 is a Mg(2+) binding site.

It belongs to the pyruvate kinase family. The protein in the C-terminal section; belongs to the PEP-utilizing enzyme family. As to quaternary structure, homotetramer. Requires Mg(2+) as cofactor. K(+) serves as cofactor.

It carries out the reaction pyruvate + ATP = phosphoenolpyruvate + ADP + H(+). The protein operates within carbohydrate degradation; glycolysis; pyruvate from D-glyceraldehyde 3-phosphate: step 5/5. The sequence is that of Pyruvate kinase (pyk) from Sporosarcina psychrophila (Bacillus psychrophilus).